The following is a 170-amino-acid chain: Adenine phosphoribosyltransferase (170 aa).

Belongs to the purine/pyrimidine phosphoribosyltransferase family. Homodimer.

It is found in the cytoplasm. The enzyme catalyses AMP + diphosphate = 5-phospho-alpha-D-ribose 1-diphosphate + adenine. It participates in purine metabolism; AMP biosynthesis via salvage pathway; AMP from adenine: step 1/1. Its function is as follows. Catalyzes a salvage reaction resulting in the formation of AMP, that is energically less costly than de novo synthesis. The polypeptide is Adenine phosphoribosyltransferase (Pseudothermotoga lettingae (strain ATCC BAA-301 / DSM 14385 / NBRC 107922 / TMO) (Thermotoga lettingae)).